A 100-amino-acid polypeptide reads, in one-letter code: Small ribosomal subunit protein uS14c (100 aa).

This sequence belongs to the universal ribosomal protein uS14 family. Part of the 30S ribosomal subunit.

The protein resides in the plastid. The protein localises to the chloroplast. Binds 16S rRNA, required for the assembly of 30S particles. This is Small ribosomal subunit protein uS14c from Gossypium barbadense (Sea Island cotton).